Consider the following 317-residue polypeptide: Ribosomal RNA small subunit methyltransferase A (317 aa).

Residues Asn37, Val39, Gly64, Glu85, Asp115, and Asn134 each contribute to the S-adenosyl-L-methionine site. Residues 293–317 (GGSDEATSTGRDARAPDISGHASAS) are disordered.

This sequence belongs to the class I-like SAM-binding methyltransferase superfamily. rRNA adenine N(6)-methyltransferase family. RsmA subfamily.

The protein resides in the cytoplasm. It catalyses the reaction adenosine(1518)/adenosine(1519) in 16S rRNA + 4 S-adenosyl-L-methionine = N(6)-dimethyladenosine(1518)/N(6)-dimethyladenosine(1519) in 16S rRNA + 4 S-adenosyl-L-homocysteine + 4 H(+). Specifically dimethylates two adjacent adenosines (A1518 and A1519) in the loop of a conserved hairpin near the 3'-end of 16S rRNA in the 30S particle. May play a critical role in biogenesis of 30S subunits. This is Ribosomal RNA small subunit methyltransferase A from Mycobacterium bovis (strain BCG / Tokyo 172 / ATCC 35737 / TMC 1019).